The following is a 201-amino-acid chain: Acyl-homoserine-lactone synthase (201 aa).

It belongs to the autoinducer synthase family.

It catalyses the reaction a fatty acyl-[ACP] + S-adenosyl-L-methionine = an N-acyl-L-homoserine lactone + S-methyl-5'-thioadenosine + holo-[ACP] + H(+). Functionally, required for the synthesis of PAI consisting of 3-oxo-N-(tetrahydro-2-oxo-3-furanyl)-dodecanamide also known as N-(3-oxododecanoyl)homoserine lactone, an autoinducer molecule which binds to LasR and thus acts in elastase biosynthesis regulation. The protein is Acyl-homoserine-lactone synthase (lasI) of Pseudomonas aeruginosa (strain ATCC 15692 / DSM 22644 / CIP 104116 / JCM 14847 / LMG 12228 / 1C / PRS 101 / PAO1).